A 353-amino-acid polypeptide reads, in one-letter code: tRNA N6-adenosine threonylcarbamoyltransferase (353 aa).

2 residues coordinate Fe cation: His-119 and His-123. Substrate contacts are provided by residues 145–149, Asp-178, Gly-191, and Asn-285; that span reads LVSGG. Position 313 (Asp-313) interacts with Fe cation.

The protein belongs to the KAE1 / TsaD family. Requires Fe(2+) as cofactor.

It localises to the cytoplasm. The enzyme catalyses L-threonylcarbamoyladenylate + adenosine(37) in tRNA = N(6)-L-threonylcarbamoyladenosine(37) in tRNA + AMP + H(+). Its function is as follows. Required for the formation of a threonylcarbamoyl group on adenosine at position 37 (t(6)A37) in tRNAs that read codons beginning with adenine. Is involved in the transfer of the threonylcarbamoyl moiety of threonylcarbamoyl-AMP (TC-AMP) to the N6 group of A37, together with TsaE and TsaB. TsaD likely plays a direct catalytic role in this reaction. This Magnetococcus marinus (strain ATCC BAA-1437 / JCM 17883 / MC-1) protein is tRNA N6-adenosine threonylcarbamoyltransferase.